A 211-amino-acid polypeptide reads, in one-letter code: Glycerol-3-phosphate acyltransferase (211 aa).

5 helical membrane-spanning segments follow: residues 10 to 30, 63 to 83, 90 to 110, 126 to 146, and 152 to 172; these read FTTWLIFLISYLIGSIPFGLL, ALTLLCDILKGTLVILVIKFL, NIFISLAGFFAFLGHLFPVWL, LGLYWPAAIVFITAWIVLFLI, and LSALIAVIITPIFVHFSYPYL.

This sequence belongs to the PlsY family. As to quaternary structure, probably interacts with PlsX.

It localises to the cell inner membrane. The catalysed reaction is an acyl phosphate + sn-glycerol 3-phosphate = a 1-acyl-sn-glycero-3-phosphate + phosphate. Its pathway is lipid metabolism; phospholipid metabolism. Catalyzes the transfer of an acyl group from acyl-phosphate (acyl-PO(4)) to glycerol-3-phosphate (G3P) to form lysophosphatidic acid (LPA). This enzyme utilizes acyl-phosphate as fatty acyl donor, but not acyl-CoA or acyl-ACP. The chain is Glycerol-3-phosphate acyltransferase from Bartonella henselae (strain ATCC 49882 / DSM 28221 / CCUG 30454 / Houston 1) (Rochalimaea henselae).